The sequence spans 485 residues: Phosphoglucosamine mutase (485 aa).

Serine 133 functions as the Phosphoserine intermediate in the catalytic mechanism. Serine 133, aspartate 274, aspartate 276, and aspartate 278 together coordinate Mg(2+). Serine 133 is subject to Phosphoserine.

It belongs to the phosphohexose mutase family. The cofactor is Mg(2+). In terms of processing, activated by phosphorylation.

The catalysed reaction is alpha-D-glucosamine 1-phosphate = D-glucosamine 6-phosphate. Its function is as follows. Catalyzes the conversion of glucosamine-6-phosphate to glucosamine-1-phosphate. The sequence is that of Phosphoglucosamine mutase from Rippkaea orientalis (strain PCC 8801 / RF-1) (Cyanothece sp. (strain PCC 8801)).